The sequence spans 248 residues: Killer cell lectin-like receptor subfamily I member 1 (248 aa).

Residues M1–R80 are Cytoplasmic-facing. 2 short sequence motifs (ITIM motif) span residues V16 to L21 and L47 to L52. Residues V81–L101 form a helical; Signal-anchor for type II membrane protein membrane-spanning segment. Residues P102 to I248 lie on the Extracellular side of the membrane. 3 disulfides stabilise this stretch: C132–C145, C161–C244, and C223–C236. The region spanning F139 to E245 is the C-type lectin domain. N-linked (GlcNAc...) asparagine glycans are attached at residues N197, N214, and N220.

As to quaternary structure, heterodimer with KLRE1. Interacts with PTPN6. Expressed in natural killer (NK) cells.

It localises to the cell membrane. Its function is as follows. Lectin-like receptor for natural killer (NK) cells. Heterodimer formation with KLRE1 mediates inhibition of NK cell cytolytic activity. The chain is Killer cell lectin-like receptor subfamily I member 1 from Mus musculus (Mouse).